A 144-amino-acid polypeptide reads, in one-letter code: MIALIQRVSQAKVDVNGQTVGQIGGGLLVLLGVEKEDSKEKADKLAEKVLNYRIFGDKNDKMNLNVQQTDGELLVVSQFTLAADTGRGLRPSFSKGAPPQLANELYQYFVQKCGEKVRVETGKFAENMQVSLTNDGPVTFWLKV.

A Gly-cisPro motif, important for rejection of L-amino acids motif is present at residues 136 to 137; sequence GP.

The protein belongs to the DTD family. Homodimer.

The protein resides in the cytoplasm. It catalyses the reaction glycyl-tRNA(Ala) + H2O = tRNA(Ala) + glycine + H(+). The catalysed reaction is a D-aminoacyl-tRNA + H2O = a tRNA + a D-alpha-amino acid + H(+). Its function is as follows. An aminoacyl-tRNA editing enzyme that deacylates mischarged D-aminoacyl-tRNAs. Also deacylates mischarged glycyl-tRNA(Ala), protecting cells against glycine mischarging by AlaRS. Acts via tRNA-based rather than protein-based catalysis; rejects L-amino acids rather than detecting D-amino acids in the active site. By recycling D-aminoacyl-tRNA to D-amino acids and free tRNA molecules, this enzyme counteracts the toxicity associated with the formation of D-aminoacyl-tRNA entities in vivo and helps enforce protein L-homochirality. The sequence is that of D-aminoacyl-tRNA deacylase from Mannheimia succiniciproducens (strain KCTC 0769BP / MBEL55E).